The sequence spans 140 residues: MAIERTFSIIKPDATRRNLTGAVNAVIETAGLRIVAQKRILMTKAQAETFYAVHSARPFFGDLVSFMTSGPVVVQVLEAENAVAKYREVMGATNPANAAEGTIRKLLAESIEANSAHGSDSVENAAVEIAQFFSGNEIVG.

ATP contacts are provided by Lys11, Phe59, Arg87, Thr93, Arg104, and Asn114. His117 (pros-phosphohistidine intermediate) is an active-site residue.

The protein belongs to the NDK family. In terms of assembly, homotetramer. The cofactor is Mg(2+).

It localises to the cytoplasm. It catalyses the reaction a 2'-deoxyribonucleoside 5'-diphosphate + ATP = a 2'-deoxyribonucleoside 5'-triphosphate + ADP. It carries out the reaction a ribonucleoside 5'-diphosphate + ATP = a ribonucleoside 5'-triphosphate + ADP. Major role in the synthesis of nucleoside triphosphates other than ATP. The ATP gamma phosphate is transferred to the NDP beta phosphate via a ping-pong mechanism, using a phosphorylated active-site intermediate. This chain is Nucleoside diphosphate kinase, found in Xanthobacter autotrophicus (strain ATCC BAA-1158 / Py2).